The chain runs to 164 residues: SsrA-binding protein (164 aa).

This sequence belongs to the SmpB family.

Its subcellular location is the cytoplasm. Its function is as follows. Required for rescue of stalled ribosomes mediated by trans-translation. Binds to transfer-messenger RNA (tmRNA), required for stable association of tmRNA with ribosomes. tmRNA and SmpB together mimic tRNA shape, replacing the anticodon stem-loop with SmpB. tmRNA is encoded by the ssrA gene; the 2 termini fold to resemble tRNA(Ala) and it encodes a 'tag peptide', a short internal open reading frame. During trans-translation Ala-aminoacylated tmRNA acts like a tRNA, entering the A-site of stalled ribosomes, displacing the stalled mRNA. The ribosome then switches to translate the ORF on the tmRNA; the nascent peptide is terminated with the 'tag peptide' encoded by the tmRNA and targeted for degradation. The ribosome is freed to recommence translation, which seems to be the essential function of trans-translation. This is SsrA-binding protein from Shewanella woodyi (strain ATCC 51908 / MS32).